Consider the following 158-residue polypeptide: Pyruvoyl-dependent arginine decarboxylase (158 aa).

The residue at position 44 (S44) is a Pyruvic acid (Ser).

It belongs to the PdaD family. Pyruvate is required as a cofactor.

It catalyses the reaction L-arginine + H(+) = agmatine + CO2. The chain is Pyruvoyl-dependent arginine decarboxylase from Thermococcus sibiricus (strain DSM 12597 / MM 739).